Reading from the N-terminus, the 4061-residue chain is Hybrid PKS-NRPS synthetase tasS (4061 aa).

Residues 7 to 472 form the Ketosynthase family 3 (KS3) domain; that stretch reads QEPIAVIGMA…GTNAHAIIEG (466 aa). Cysteine 180 is a catalytic residue. Residues 586 to 911 form a malonyl-CoA:ACP transacylase (MAT) domain region; it reads VFTGQGAQWP…RQKNDVEELL (326 aa). Positions 977-1113 are N-terminal hotdog fold; that stretch reads HPLLGRRCVE…ATVNVTFHEP (137 aa). Residues 977-1280 form a dehydratase (DH) domain region; that stretch reads HPLLGRRCVE…VRVQPFSVAG (304 aa). The region spanning 977–1282 is the PKS/mFAS DH domain; that stretch reads HPLLGRRCVE…VQPFSVAGPQ (306 aa). The active-site Proton acceptor; for dehydratase activity is the histidine 1010. The C-terminal hotdog fold stretch occupies residues 1128 to 1282; it reads LANAEPQRLY…VQPFSVAGPQ (155 aa). Aspartate 1188 functions as the Proton donor; for dehydratase activity in the catalytic mechanism. The segment at 1425 to 1619 is methyltransferase (MT) domain; sequence LDRFYEEGFE…GFNGVETHTP (195 aa). Positions 2153–2325 are ketoreductase (KR) domain; it reads TYFLLGLSGE…GVVGSDMAIG (173 aa). One can recognise a Carrier 1 domain in the interval 2437-2516; it reads EAIKVVFDTF…LLVEEAVDKL (80 aa). An O-(pantetheine 4'-phosphoryl)serine modification is found at serine 2475. The interval 2527 to 2617 is disordered; sequence EHGGEPDLTQ…QKHQEQTSQS (91 aa). The span at 2556-2576 shows a compositional bias: low complexity; sequence TSAASSSDTGSDSSPTSNSVS. Residues 2577–2592 are compositionally biased toward polar residues; sequence ETQTGTPLETPMSTTE. The interval 2632–3077 is condensation (C) domain; the sequence is QMTFGQNRFW…ELATWDTESE (446 aa). Positions 3103 to 3510 are adenylation (A) (KR) domain; sequence QVIADHPDAV…RGYLTVEGRI (408 aa). One can recognise a Carrier 2 domain in the interval 3633–3712; that stretch reads QNLTATERTL…SMAALLDDGV (80 aa). Serine 3672 bears the O-(pantetheine 4'-phosphoryl)serine mark. The interval 3813 to 3969 is reductase (RED) domain; that stretch reads DIDVVLHCAA…LSPLEDAVEA (157 aa).

In the C-terminal section; belongs to the NRP synthetase family.

The catalysed reaction is (2S,4S)-4-hydroxy-4-methylglutamate + 8 malonyl-CoA + 3 S-adenosyl-L-methionine + ATP + 8 NADPH + 11 H(+) = (2S)-3-[(2S)-3,5-dioxo-4-[(2E,4R,6R,8E,10E,12E)-4,6,12-trimethyltetradeca-2,8,10,12-tetraenoyl]pyrrolidin-2-yl]-2-hydroxy-2-methylpropanoate + AMP + 3 S-adenosyl-L-homocysteine + 8 CO2 + diphosphate + 8 NADP(+) + 8 CoA + 6 H2O. It participates in secondary metabolite biosynthesis. Hybrid PKS-NRPS synthetase; part of the gene cluster that mediates the biosynthesis of the tetramic acids Sch210971 and Sch210972, potential anti-HIV fungal natural product that contain a decalin core. The PKS module of tasS together with the enoylreductase tasC catalyze the formation of the polyketide unit which is then conjugated to 4-hydroxyl-4-methyl glutamate (HMG) by the condensation domain of the tasS NRPS module. One unique structural feature of Sch210971 and Sch210972 is the tetramic acid motif proposed to be derived from the non-proteinogenic amino acid HMG, by a Dieckmann-type condensation catalyzed by the reductase domain of tasS. The aldolase tasA catalyzes the aldol condensation of 2 molecules of pyruvic acid to yield the intermediate 4-hydroxyl-4-methyl-2-oxoglutarate (HMOG), which can then be stereoselectively transaminated, may be by tasG, to form HMG. The Diels-Alderase tas3 then uses the Dieckmann product of tasS as substrate and catalyzes the Diels-Alder cycloaddition to form the decalin ring of Sch210971 and Sch210972. This is Hybrid PKS-NRPS synthetase tasS from Hapsidospora irregularis.